Here is a 206-residue protein sequence, read N- to C-terminus: Large ribosomal subunit protein mL40 (206 aa).

A mitochondrion-targeting transit peptide spans 1–46 (MATGVMLCAARALRPRSWIPGTCQAHVRHTHQRASLLAFWDLIPMR). The interval 170–189 (PFEKEGPHYTPPISNYQAPE) is disordered.

The protein belongs to the mitochondrion-specific ribosomal protein mL40 family. As to quaternary structure, component of the mitochondrial ribosome large subunit (39S) which comprises a 16S rRNA and about 50 distinct proteins. Ubiquitous.

The protein localises to the mitochondrion. The polypeptide is Large ribosomal subunit protein mL40 (Mrpl40) (Mus musculus (Mouse)).